An 89-amino-acid chain; its full sequence is DNA-binding protein HU (89 aa).

It belongs to the bacterial histone-like protein family. As to quaternary structure, homodimer. The dimer interacts with the DNA mimic protein DMP12. It also interacts with the monomeric form of the DNA mimic protein DMP19 with 1:1 stoichiometry.

With respect to regulation, activity is regulated by the DNA mimic protein DMP12. Activity is inhibited in the presence of the DNA mimic protein DMP19, which interacts with HU and prevents the binding of HU to DNA. Its function is as follows. Histone-like DNA-binding protein which is capable of wrapping DNA to stabilize it, and thus to prevent its denaturation under extreme environmental conditions. The chain is DNA-binding protein HU from Neisseria meningitidis serogroup B (strain ATCC BAA-335 / MC58).